The chain runs to 407 residues: Putative membrane protein 047R (407 aa).

The tract at residues 265–337 is disordered; it reads INCVFKPDPP…PPKPTPPPPI (73 aa). A compositionally biased stretch (pro residues) spans 271 to 337; it reads PDPPPQPKPQ…PPKPTPPPPI (67 aa). Helical transmembrane passes span 355–372 and 385–403; these read NWIM…VIYP and NAAI…QSYV.

The protein belongs to the IIV-6 337L family.

It localises to the virion membrane. The chain is Putative membrane protein 047R from Aedes vexans (Inland floodwater mosquito).